The following is a 510-amino-acid chain: 2-isopropylmalate synthase (510 aa).

The Pyruvate carboxyltransferase domain maps to 5 to 267 (LIIFDTTLRD…DTRIDSVHIV (263 aa)). 4 residues coordinate Mn(2+): aspartate 14, histidine 202, histidine 204, and asparagine 238. A regulatory domain region spans residues 392–510 (KLLSLTAHSE…SKLERAHPQV (119 aa)).

This sequence belongs to the alpha-IPM synthase/homocitrate synthase family. LeuA type 1 subfamily. In terms of assembly, homodimer. Mn(2+) serves as cofactor.

Its subcellular location is the cytoplasm. It catalyses the reaction 3-methyl-2-oxobutanoate + acetyl-CoA + H2O = (2S)-2-isopropylmalate + CoA + H(+). It functions in the pathway amino-acid biosynthesis; L-leucine biosynthesis; L-leucine from 3-methyl-2-oxobutanoate: step 1/4. In terms of biological role, catalyzes the condensation of the acetyl group of acetyl-CoA with 3-methyl-2-oxobutanoate (2-ketoisovalerate) to form 3-carboxy-3-hydroxy-4-methylpentanoate (2-isopropylmalate). This Nitrosospira multiformis (strain ATCC 25196 / NCIMB 11849 / C 71) protein is 2-isopropylmalate synthase.